A 231-amino-acid polypeptide reads, in one-letter code: Cytochrome c oxidase assembly factor 7A (231 aa).

5 Sel1-like repeats span residues Pro34–Glu66, Ser68–Gly104, Ile108–Phe145, Ala146–His182, and Val183–Lys218.

This sequence belongs to the hcp beta-lactamase family.

Its subcellular location is the mitochondrion intermembrane space. Its function is as follows. May be required for assembly of mitochondrial respiratory chain complexes. This chain is Cytochrome c oxidase assembly factor 7A (coa7-a), found in Xenopus laevis (African clawed frog).